The chain runs to 321 residues: MTLSLANYLAADSAAEALRRDVRAGLTAAPKSLPPKWFYDAVGSDLFDQITRLPEYYPTRTEAQILRTRSAEIIAAAGADTLVELGSGTSEKTRMLLDAMRDAELLRRFIPFDVDAGVLRSAGAAIGAEYPGIEIDAVCGDFEEHLGKIPHVGRRLVVFLGSTIGNLTPAPRAEFLSTLADTLQPGDSLLLGTDLVKDTGRLVRAYDDAAGVTAAFNRNVLAVVNRELSADFDLDAFEHVAKWNSDEERIEMWLRARTAQHVRVAALDLEVDFAAGEEMLTEVSCKFRPENVVAELAEAGLRQTHWWTDPAGDFGLSLAVR.

Position 56 (tyrosine 56) interacts with L-histidine. Residues glycine 86, lysine 92, aspartate 113, and aspartate 141–phenylalanine 142 contribute to the S-adenosyl-L-methionine site. L-histidine is bound by residues asparagine 166, tyrosine 206, and glutamate 282 to serine 284.

The protein belongs to the methyltransferase superfamily. EgtD family. As to quaternary structure, monomer.

The catalysed reaction is L-histidine + 3 S-adenosyl-L-methionine = hercynine + 3 S-adenosyl-L-homocysteine + 3 H(+). It functions in the pathway amino-acid biosynthesis; ergothioneine biosynthesis. In terms of biological role, catalyzes the SAM-dependent triple methylation of the alpha-amino group of histidine to form hercynine, a step in the biosynthesis pathway of ergothioneine. Among all the proteinogenic amino acids, only L-histidine is a substrate. The polypeptide is Histidine N-alpha-methyltransferase (Mycolicibacterium smegmatis (strain ATCC 700084 / mc(2)155) (Mycobacterium smegmatis)).